The sequence spans 877 residues: DNA (cytosine-5)-methyltransferase 3A (877 aa).

Disordered regions lie at residues 1–154 (MVES…MQRH), 194–250 (EETP…PEYE), and 412–431 (AYAP…EKPK). Basic and acidic residues-rich tracts occupy residues 107-133 (KLLE…EGSR) and 195-206 (ETPRAEPQKEEE). The segment covering 210–225 (PASQQPTDPASPNVAT) has biased composition (polar residues). Residues 226–284 (TPEPVVADAVDKNTSKSADDEPEYEDGRGLGIGELVWGKLRGFSWWPGRIVSWWMTGRS) enclose the PWWP domain. Basic and acidic residues predominate over residues 234-244 (AVDKNTSKSAD). In terms of domain architecture, ADD spans 447–579 (EVRQKCRNIE…LQMFFANNHD (133 aa)). The GATA-type; atypical zinc finger occupies 458–488 (ICISCGSLNVTLEHPLFIGGMCQNCKNCFLE). The segment at 499–555 (QSYCTICCGGREVLMCGNNNCCRCFCVECVDLLVGPGAAQAAIKEDPWNCYMCGHKG) adopts a PHD-type; atypical zinc-finger fold. One can recognise an SAM-dependent MTase C5-type domain in the interval 599–877 (IRVLSLFDGI…APLKEYFACV (279 aa)). S-adenosyl-L-methionine is bound by residues 606 to 610 (DGIAT), glutamate 629, and 651 to 653 (DVR). Cysteine 675 is a catalytic residue. 856 to 858 (RSW) serves as a coordination point for S-adenosyl-L-methionine.

It belongs to the class I-like SAM-binding methyltransferase superfamily. C5-methyltransferase family.

It localises to the nucleus. Its subcellular location is the chromosome. It is found in the cytoplasm. It catalyses the reaction a 2'-deoxycytidine in DNA + S-adenosyl-L-methionine = a 5-methyl-2'-deoxycytidine in DNA + S-adenosyl-L-homocysteine + H(+). It carries out the reaction L-cysteinyl-[protein] + S-adenosyl-L-methionine = S-methyl-L-cysteinyl-[protein] + S-adenosyl-L-homocysteine + H(+). Required for genome-wide de novo methylation and is essential for development. DNA methylation is coordinated with methylation of histones. It modifies DNA in a non-processive manner and also methylates non-CpG sites. Acts as a transcriptional corepressor for ZNF238. Can actively repress transcription through the recruitment of HDAC activity. Also has weak auto-methylation activity on some Cys residue in absence of DNA. The sequence is that of DNA (cytosine-5)-methyltransferase 3A (DNMT3A) from Gallus gallus (Chicken).